Here is a 713-residue protein sequence, read N- to C-terminus: Calpain-1 catalytic subunit (713 aa).

In terms of domain architecture, Calpain catalytic spans 55 to 354 (LFQDEAFPPV…FTKLEICNLT (300 aa)). Ca(2+)-binding residues include Gln109 and Asp114. Residues Cys115, His272, and Asn296 contribute to the active site. Ca(2+) is bound by residues Asp318 and Glu323. Position 354 is a phosphothreonine (Thr354). Positions 355 to 525 (PDALKSRTLR…KKAGTQELDD (171 aa)) are domain III. Residues 526–541 (QIQANLPDEKVLSEEE) are linker. 4 EF-hand domains span residues 540–575 (EEIDDNFKTLFSKLAGDDMEISVKELQTILNRIISK), 584–617 (FSLESCRSMVNLMDRDGNGKLGLVEFNILWNRIR), 614–649 (NRIRNYLTIFRKFDLDKSGSMSAYEMRMAIEAAGFK), and 679–713 (VRLETMFRFFKLLDTDLDGVVTFDLFKWLQLTMFA). The segment at 542–712 (IDDNFKTLFS…LFKWLQLTMF (171 aa)) is domain IV. 10 residues coordinate Ca(2+): Asp597, Asp599, Asn601, Lys603, Glu608, Asp627, Asp629, Ser631, Ser633, and Glu638.

This sequence belongs to the peptidase C2 family. In terms of assembly, forms a heterodimer with a small (regulatory) subunit CAPNS1. Ca(2+) is required as a cofactor. Undergoes calcium-induced successive autoproteolytic cleavages that generate a membrane-bound 78 kDa active form and an intracellular 75 kDa active form. Calpastatin reduces with high efficiency the transition from 78 kDa to 75 kDa calpain forms.

The protein resides in the cytoplasm. The protein localises to the cell membrane. The enzyme catalyses Broad endopeptidase specificity.. Its activity is regulated as follows. Activated by micromolar concentrations of calcium and inhibited by calpastatin. In terms of biological role, calcium-regulated non-lysosomal thiol-protease which catalyzes limited proteolysis of substrates involved in cytoskeletal remodeling and signal transduction. Proteolytically cleaves CTBP1 at 'Asn-375', 'Gly-388' and 'His-410'. Cleaves and activates caspase-7 (CASP7). The polypeptide is Calpain-1 catalytic subunit (Mus musculus (Mouse)).